A 300-amino-acid chain; its full sequence is MSLVNGRRRTAASVVALTAALTALAALCAPAQAQDTKATSKAAEAAKPDAGTLRVCAAEQPPLSMKDGSGLENRIATTVAEAMGRKAQFVWLGKPAIYLVRDGLEKKTCDVVIGLDADDPRVLTSKPYYRSGYVFLTRADKDLDIKSWSDPRLKEVSHMVVGFGTPGEAMLKDIGRYEEDMAYLYSLVNFRAPRNQYTQIDPARMVSEVATGKAEVGVAFGPDVARYVRDSSTKLRMTPVPDDTQASDGRKMPQSFDQAMGVRKDDTALKAEIDAALEKAKPKIEAILKEEGVPVLPVSN.

Positions 1–25 (MSLVNGRRRTAASVVALTAALTALA) are cleaved as a signal peptide.

The protein resides in the periplasm. Functionally, may be involved in the assemblage of active methanol dehydrogenase and/or its cofactor PQQ in the periplasm. The polypeptide is Protein MoxJ (moxJ) (Methylorubrum extorquens (strain ATCC 14718 / DSM 1338 / JCM 2805 / NCIMB 9133 / AM1) (Methylobacterium extorquens)).